The chain runs to 326 residues: Vacuolar protein sorting-associated protein 26A (326 aa).

The protein belongs to the VPS26 family. In terms of assembly, component of the heterotrimeric retromer cargo-selective complex (CSC) which is believed to associate with variable sorting nexins to form functionally distinct retromer complex variants.

It is found in the cytoplasm. It localises to the endosome membrane. The protein localises to the early endosome. In terms of biological role, acts as a component of the retromer cargo-selective complex (CSC). The CSC is believed to be the core functional component of retromer or respective retromer complex variants acting to prevent missorting of selected transmembrane cargo proteins into the lysosomal degradation pathway. Retromer mediates retrograde transport of cargo proteins from endosomes to the trans-Golgi network (TGN). This Xenopus tropicalis (Western clawed frog) protein is Vacuolar protein sorting-associated protein 26A (vps26a).